The sequence spans 162 residues: Sec-independent protein translocase protein TatB (162 aa).

The chain crosses the membrane as a helical span at residues 1–21; that stretch reads MFDIGFLEIIVIMVIALIVIG. Residues 86-162 form a disordered region; sequence IQDEFGIDQE…ESTPESSNKS (77 aa). Positions 108–117 are enriched in polar residues; sequence FSGTQFNKAP. Low complexity predominate over residues 123-135; that stretch reads PTTEESPSSTPET. Residues 147-162 are compositionally biased toward polar residues; it reads DVSAPSESTPESSNKS.

The protein belongs to the TatB family. As to quaternary structure, the Tat system comprises two distinct complexes: a TatABC complex, containing multiple copies of TatA, TatB and TatC subunits, and a separate TatA complex, containing only TatA subunits. Substrates initially bind to the TatABC complex, which probably triggers association of the separate TatA complex to form the active translocon.

The protein resides in the cell inner membrane. Its function is as follows. Part of the twin-arginine translocation (Tat) system that transports large folded proteins containing a characteristic twin-arginine motif in their signal peptide across membranes. Together with TatC, TatB is part of a receptor directly interacting with Tat signal peptides. TatB may form an oligomeric binding site that transiently accommodates folded Tat precursor proteins before their translocation. The protein is Sec-independent protein translocase protein TatB of Hydrogenovibrio crunogenus (strain DSM 25203 / XCL-2) (Thiomicrospira crunogena).